The chain runs to 196 residues: Glycerol-3-phosphate acyltransferase (196 aa).

The next 4 helical transmembrane spans lie at 4-24 (IYIA…GLIL), 70-90 (VLIA…LGAF), 111-131 (IGVL…LWLA), and 152-172 (IFLW…LTLL).

It belongs to the PlsY family. As to quaternary structure, probably interacts with PlsX.

It localises to the cell inner membrane. It catalyses the reaction an acyl phosphate + sn-glycerol 3-phosphate = a 1-acyl-sn-glycero-3-phosphate + phosphate. It participates in lipid metabolism; phospholipid metabolism. Its function is as follows. Catalyzes the transfer of an acyl group from acyl-phosphate (acyl-PO(4)) to glycerol-3-phosphate (G3P) to form lysophosphatidic acid (LPA). This enzyme utilizes acyl-phosphate as fatty acyl donor, but not acyl-CoA or acyl-ACP. The sequence is that of Glycerol-3-phosphate acyltransferase from Rhodopseudomonas palustris (strain BisB5).